Reading from the N-terminus, the 247-residue chain is 3-deoxy-manno-octulosonate cytidylyltransferase (247 aa).

This sequence belongs to the KdsB family.

The protein localises to the cytoplasm. The enzyme catalyses 3-deoxy-alpha-D-manno-oct-2-ulosonate + CTP = CMP-3-deoxy-beta-D-manno-octulosonate + diphosphate. Its pathway is nucleotide-sugar biosynthesis; CMP-3-deoxy-D-manno-octulosonate biosynthesis; CMP-3-deoxy-D-manno-octulosonate from 3-deoxy-D-manno-octulosonate and CTP: step 1/1. It functions in the pathway bacterial outer membrane biogenesis; lipopolysaccharide biosynthesis. In terms of biological role, activates KDO (a required 8-carbon sugar) for incorporation into bacterial lipopolysaccharide in Gram-negative bacteria. The protein is 3-deoxy-manno-octulosonate cytidylyltransferase of Bdellovibrio bacteriovorus (strain ATCC 15356 / DSM 50701 / NCIMB 9529 / HD100).